The sequence spans 192 residues: Phosphoheptose isomerase (192 aa).

An SIS domain is found at 36-192; sequence CVDSLAAGGK…DQVEAVAAPA (157 aa). 51–53 serves as a coordination point for substrate; the sequence is NGG. Zn(2+)-binding residues include His60 and Glu64. Substrate contacts are provided by residues Glu64, 93–94, 119–121, Ser124, and Gln171; these read ND and TTS. Zn(2+) is bound by residues Gln171 and His179.

Belongs to the SIS family. GmhA subfamily. In terms of assembly, homotetramer. Requires Zn(2+) as cofactor.

The protein resides in the cytoplasm. The catalysed reaction is 2 D-sedoheptulose 7-phosphate = D-glycero-alpha-D-manno-heptose 7-phosphate + D-glycero-beta-D-manno-heptose 7-phosphate. It participates in carbohydrate biosynthesis; D-glycero-D-manno-heptose 7-phosphate biosynthesis; D-glycero-alpha-D-manno-heptose 7-phosphate and D-glycero-beta-D-manno-heptose 7-phosphate from sedoheptulose 7-phosphate: step 1/1. Its function is as follows. Catalyzes the isomerization of sedoheptulose 7-phosphate in D-glycero-D-manno-heptose 7-phosphate. The polypeptide is Phosphoheptose isomerase (Paramagnetospirillum magneticum (strain ATCC 700264 / AMB-1) (Magnetospirillum magneticum)).